A 186-amino-acid polypeptide reads, in one-letter code: Peptide deformylase (186 aa).

Positions 113 and 156 each coordinate Fe cation. The active site involves Glu-157. Position 160 (His-160) interacts with Fe cation.

The protein belongs to the polypeptide deformylase family. Requires Fe(2+) as cofactor.

The enzyme catalyses N-terminal N-formyl-L-methionyl-[peptide] + H2O = N-terminal L-methionyl-[peptide] + formate. Functionally, removes the formyl group from the N-terminal Met of newly synthesized proteins. Requires at least a dipeptide for an efficient rate of reaction. N-terminal L-methionine is a prerequisite for activity but the enzyme has broad specificity at other positions. This is Peptide deformylase from Limosilactobacillus reuteri (strain DSM 20016) (Lactobacillus reuteri).